Here is a 352-residue protein sequence, read N- to C-terminus: N-acetyl-gamma-glutamyl-phosphate reductase (352 aa).

It belongs to the NAGSA dehydrogenase family. Type 1 subfamily.

The protein resides in the cytoplasm. The enzyme catalyses N-acetyl-L-glutamate 5-semialdehyde + phosphate + NADP(+) = N-acetyl-L-glutamyl 5-phosphate + NADPH + H(+). It participates in amino-acid biosynthesis; L-arginine biosynthesis; N(2)-acetyl-L-ornithine from L-glutamate: step 3/4. Functionally, catalyzes the NADPH-dependent reduction of N-acetyl-5-glutamyl phosphate to yield N-acetyl-L-glutamate 5-semialdehyde. The sequence is that of N-acetyl-gamma-glutamyl-phosphate reductase from Nostoc ellipsosporum.